Reading from the N-terminus, the 286-residue chain is Beta-lactamase SHV-2 (286 aa).

The N-terminal stretch at 1–21 (MRYIRLCIISLLATLPLAVHA) is a signal peptide. The active-site Acyl-ester intermediate is the S66. An intrachain disulfide couples C73 to C119. The active-site Proton acceptor is the E164. 230 to 232 (KTG) lines the substrate pocket.

Belongs to the class-A beta-lactamase family.

The enzyme catalyses a beta-lactam + H2O = a substituted beta-amino acid. This enzyme hydrolyzes cefotaxime, ceftazidime and other broad spectrum cephalosporins. The chain is Beta-lactamase SHV-2 (bla) from Klebsiella pneumoniae.